Here is a 338-residue protein sequence, read N- to C-terminus: Sulfotransferase 2B1 (338 aa).

3'-phosphoadenylyl sulfate is bound at residue 67-72; it reads KSGTNW. Substrate is bound by residues Trp95 and Trp100. His122 functions as the Proton acceptor in the catalytic mechanism. Residues Arg144, Ser152, Tyr207, 241–246, and 271–273 each bind 3'-phosphoadenylyl sulfate; these read SAFAAM and RKG. A disordered region spans residues 301–338; the sequence is VQRFPWDTSEEDSSPDGQPDPEPSPSPASDDPNPGSSQ. The segment covering 327 to 338 has biased composition (low complexity); the sequence is PASDDPNPGSSQ.

The protein belongs to the sulfotransferase 1 family. Expressed at high levels in epididymis, intestine and uterus, and low levels in brain and hypothalamus. Isoform 2 is most prominent in the brain and spinal cord, with modest expression in the lung, skin and spleen. Isoform 1 is most prominently expressed in skin and small intestine, with modest expression in muscle and prostate.

It localises to the cytoplasm. The protein localises to the cytosol. The protein resides in the microsome. Its subcellular location is the nucleus. It catalyses the reaction an alcohol + 3'-phosphoadenylyl sulfate = an alkyl sulfate + adenosine 3',5'-bisphosphate + H(+). The catalysed reaction is pregnenolone + 3'-phosphoadenylyl sulfate = pregnenolone sulfate + adenosine 3',5'-bisphosphate + H(+). It carries out the reaction 3beta-hydroxyandrost-5-en-17-one + 3'-phosphoadenylyl sulfate = dehydroepiandrosterone 3-sulfate + adenosine 3',5'-bisphosphate + H(+). The enzyme catalyses cholesterol + 3'-phosphoadenylyl sulfate = cholesterol sulfate + adenosine 3',5'-bisphosphate + H(+). In terms of biological role, sulfotransferase that utilizes 3'-phospho-5'-adenylyl sulfate (PAPS) as sulfonate donor to catalyze the sulfate conjugation. Preferentially sulfonates cholesterol. Catalyzes sulfation of the 3beta-hydroxyl groups of steroids, such as, pregnenolone and dehydroepiandrosterone (DHEA). Cholesterol sulfation is approximately 10-fold higher than for pregnenolone and 20-fold higher than for DHEA. Plays a role in epidermal cholesterol metabolism and in the regulation of epidermal proliferation and differentiation. Its function is as follows. Strongly sulfonates pregnenolone, however is capable to sulfonate cholesterol with a high degree of efficiency. DHEA is a relatively poor substrate. In Mus musculus (Mouse), this protein is Sulfotransferase 2B1 (Sult2b1).